The chain runs to 316 residues: tRNA-cytidine(32) 2-sulfurtransferase (316 aa).

The PP-loop motif motif lies at 58 to 63 (SGGKDS). Positions 133, 136, and 224 each coordinate [4Fe-4S] cluster.

This sequence belongs to the TtcA family. As to quaternary structure, homodimer. It depends on Mg(2+) as a cofactor. [4Fe-4S] cluster is required as a cofactor.

It localises to the cytoplasm. It catalyses the reaction cytidine(32) in tRNA + S-sulfanyl-L-cysteinyl-[cysteine desulfurase] + AH2 + ATP = 2-thiocytidine(32) in tRNA + L-cysteinyl-[cysteine desulfurase] + A + AMP + diphosphate + H(+). Its pathway is tRNA modification. Functionally, catalyzes the ATP-dependent 2-thiolation of cytidine in position 32 of tRNA, to form 2-thiocytidine (s(2)C32). The sulfur atoms are provided by the cysteine/cysteine desulfurase (IscS) system. The protein is tRNA-cytidine(32) 2-sulfurtransferase of Aromatoleum aromaticum (strain DSM 19018 / LMG 30748 / EbN1) (Azoarcus sp. (strain EbN1)).